Consider the following 162-residue polypeptide: Shikimate kinase (162 aa).

Residue 11-16 (GSGKSS) coordinates ATP. Residue Ser15 coordinates Mg(2+). Substrate contacts are provided by Asp33, Arg57, and Gly80. Arg116 lines the ATP pocket. Substrate is bound at residue Arg132.

This sequence belongs to the shikimate kinase family. Monomer. Requires Mg(2+) as cofactor.

It localises to the cytoplasm. It catalyses the reaction shikimate + ATP = 3-phosphoshikimate + ADP + H(+). It functions in the pathway metabolic intermediate biosynthesis; chorismate biosynthesis; chorismate from D-erythrose 4-phosphate and phosphoenolpyruvate: step 5/7. Catalyzes the specific phosphorylation of the 3-hydroxyl group of shikimic acid using ATP as a cosubstrate. The protein is Shikimate kinase of Helicobacter pylori (strain J99 / ATCC 700824) (Campylobacter pylori J99).